The primary structure comprises 69 residues: Protein transport protein Sec61 subunit gamma (69 aa).

Over 1–32 (MDAVDSVVDPLREFAKDSVRLVKRCHKPDRKE) the chain is Cytoplasmic. A helical membrane pass occupies residues 33-61 (FTKVAARTAIGFVVMGFVGFFVKLIFIPI). The Extracellular portion of the chain corresponds to 62–69 (NNIIVGSG).

This sequence belongs to the SecE/SEC61-gamma family. In terms of assembly, heterotrimeric complex composed of SEC61-alpha, SEC61-beta and SEC61-gamma.

The protein resides in the endoplasmic reticulum membrane. Its function is as follows. Necessary for protein translocation in the endoplasmic reticulum. This is Protein transport protein Sec61 subunit gamma from Oryza sativa subsp. japonica (Rice).